Reading from the N-terminus, the 160-residue chain is Cyclic pyranopterin monophosphate synthase (160 aa).

Substrate contacts are provided by residues 75–77 (MCH) and 116–117 (ME). Asp-131 is a catalytic residue.

The protein belongs to the MoaC family. Homohexamer; trimer of dimers.

It carries out the reaction (8S)-3',8-cyclo-7,8-dihydroguanosine 5'-triphosphate = cyclic pyranopterin phosphate + diphosphate. It functions in the pathway cofactor biosynthesis; molybdopterin biosynthesis. Functionally, catalyzes the conversion of (8S)-3',8-cyclo-7,8-dihydroguanosine 5'-triphosphate to cyclic pyranopterin monophosphate (cPMP). In Staphylococcus haemolyticus (strain JCSC1435), this protein is Cyclic pyranopterin monophosphate synthase.